The sequence spans 662 residues: UvrABC system protein B (662 aa).

Positions 31–188 (DNIEGGEKAQ…NDLVDIQFER (158 aa)) constitute a Helicase ATP-binding domain. 44–51 (GATGTGKT) lines the ATP pocket. A Beta-hairpin motif is present at residues 97–120 (YYDYYQPEAYVPSSDTYIEKDSSV). One can recognise a Helicase C-terminal domain in the interval 435–601 (QIDDLLGEIN…TIKKEIRDLI (167 aa)). The UVR domain occupies 626 to 661 (KELVKKLEKQMQEAVEVLDFELAAQIRDMMLEVKAL).

Belongs to the UvrB family. As to quaternary structure, forms a heterotetramer with UvrA during the search for lesions. Interacts with UvrC in an incision complex.

Its subcellular location is the cytoplasm. The UvrABC repair system catalyzes the recognition and processing of DNA lesions. A damage recognition complex composed of 2 UvrA and 2 UvrB subunits scans DNA for abnormalities. Upon binding of the UvrA(2)B(2) complex to a putative damaged site, the DNA wraps around one UvrB monomer. DNA wrap is dependent on ATP binding by UvrB and probably causes local melting of the DNA helix, facilitating insertion of UvrB beta-hairpin between the DNA strands. Then UvrB probes one DNA strand for the presence of a lesion. If a lesion is found the UvrA subunits dissociate and the UvrB-DNA preincision complex is formed. This complex is subsequently bound by UvrC and the second UvrB is released. If no lesion is found, the DNA wraps around the other UvrB subunit that will check the other stand for damage. This Streptococcus pneumoniae (strain Taiwan19F-14) protein is UvrABC system protein B.